Here is a 66-residue protein sequence, read N- to C-terminus: Large ribosomal subunit protein bL33c (66 aa).

Belongs to the bacterial ribosomal protein bL33 family.

It is found in the plastid. The protein resides in the chloroplast. This is Large ribosomal subunit protein bL33c from Carica papaya (Papaya).